Reading from the N-terminus, the 319-residue chain is Methyltransferase tpcM (319 aa).

Residues 63–155 (DVGAGIGPYA…QLRPGGTFAC (93 aa)) form a methyltransferase domain region.

The protein belongs to the methyltransferase superfamily. Specifically expressed in conidia.

It participates in secondary metabolite biosynthesis. Its function is as follows. Methyltransferase; part of the gene cluster that mediates the biosynthesis of trypacidin, a mycotoxin with antiprotozoal activity and that plays a role in the infection process. The pathway begins with the synthesis of atrochrysone thioester by the polyketide synthase (PKS) tpcC. The atrochrysone carboxyl ACP thioesterase tpcB then breaks the thioester bond and releases the atrochrysone carboxylic acid from tpcC. The decarboxylase tpcK converts atrochrysone carboxylic acid to atrochrysone which is further reduced into emodin anthrone. The next step is performed by the emodin anthrone oxygenase tpcL that catalyzes the oxidation of emodinanthrone to emodin. Emodin O-methyltransferase encoded by tpcA catalyzes methylation of the 8-hydroxy group of emodin to form questin. Ring cleavage of questin by questin oxidase tpcI leads to desmethylsulochrin via several intermediates including questin epoxide. Another methylation step catalyzed by tpcM leads to the formation of sulochrin which is further converted to monomethylsulfochrin by tpcH. Finally, the tpcJ catalyzes the conversion of monomethylsulfochrin to trypacidin. Trypacidin is toxic for human pulmonary and bronchial epithelial cells by initiating the intracellular formation of nitric oxide (NO) and hydrogen peroxide (H(2)O(2)), thus triggering host necrotic cell death. The trypacidin pathway is also able to produce endocrocin via a distinct route from the endocrocin Enc pathway. The protein is Methyltransferase tpcM of Aspergillus fumigatus (strain ATCC MYA-4609 / CBS 101355 / FGSC A1100 / Af293) (Neosartorya fumigata).